Consider the following 402-residue polypeptide: Protein kinase US3 homolog (402 aa).

Disordered stretches follow at residues Met1–Asp21 and Phe46–Thr88. Residues Tyr102–Phe386 enclose the Protein kinase domain. ATP is bound by residues Leu108–Ile116 and Lys129. Residue Asp218 is the Proton acceptor of the active site.

Belongs to the protein kinase superfamily. Ser/Thr protein kinase family. In terms of processing, phosphorylated by UL13 homolog; this phosphorylation regulates subsequent phosphorylation of UL31 and UL34 homologs by US3. Autophosphorylated.

The protein localises to the host cytoplasm. The protein resides in the host nucleus. It carries out the reaction L-seryl-[protein] + ATP = O-phospho-L-seryl-[protein] + ADP + H(+). The enzyme catalyses L-threonyl-[protein] + ATP = O-phospho-L-threonyl-[protein] + ADP + H(+). Multifunctional serine/threonine kinase that plays a role in several processes including egress of virus particles from the nucleus, modulation of the actin cytoskeleton and inhibition of apoptosis. Phosphorylates UL31 and UL34 homologs, two critical regulators of capsid budding from nucleus to endoplasmic reticulum, thereby facilitating virion egress. Modulates and redistributes host components of the nuclear envelope, including LMNA, emerin/EMD and the nuclear matrix protein MATR3. Phosphorylates envelope glycoprotein B (gB), probably to direct it to the cell surface. Promotes virus intracellular spread by restructuring host cell cytoskeleton. Blocks host apoptosis to extend cell survival and allow efficient viral replication. Promotes viral gene expression by phosphorylating host HDAC2 to reduce viral genome silencing. This is Protein kinase US3 homolog (MDV092) from Gallus gallus (Chicken).